The sequence spans 558 residues: Dihydroxy-acid dehydratase (558 aa).

Asp-81 lines the Mg(2+) pocket. Residue Cys-122 participates in [2Fe-2S] cluster binding. Positions 123 and 124 each coordinate Mg(2+). An N6-carboxylysine modification is found at Lys-124. Residue Cys-195 coordinates [2Fe-2S] cluster. Residue Glu-447 participates in Mg(2+) binding. Ser-473 (proton acceptor) is an active-site residue.

It belongs to the IlvD/Edd family. Homodimer. [2Fe-2S] cluster serves as cofactor. It depends on Mg(2+) as a cofactor.

It catalyses the reaction (2R)-2,3-dihydroxy-3-methylbutanoate = 3-methyl-2-oxobutanoate + H2O. It carries out the reaction (2R,3R)-2,3-dihydroxy-3-methylpentanoate = (S)-3-methyl-2-oxopentanoate + H2O. It functions in the pathway amino-acid biosynthesis; L-isoleucine biosynthesis; L-isoleucine from 2-oxobutanoate: step 3/4. Its pathway is amino-acid biosynthesis; L-valine biosynthesis; L-valine from pyruvate: step 3/4. Functions in the biosynthesis of branched-chain amino acids. Catalyzes the dehydration of (2R,3R)-2,3-dihydroxy-3-methylpentanoate (2,3-dihydroxy-3-methylvalerate) into 2-oxo-3-methylpentanoate (2-oxo-3-methylvalerate) and of (2R)-2,3-dihydroxy-3-methylbutanoate (2,3-dihydroxyisovalerate) into 2-oxo-3-methylbutanoate (2-oxoisovalerate), the penultimate precursor to L-isoleucine and L-valine, respectively. This chain is Dihydroxy-acid dehydratase, found in Bacillus velezensis (strain DSM 23117 / BGSC 10A6 / LMG 26770 / FZB42) (Bacillus amyloliquefaciens subsp. plantarum).